We begin with the raw amino-acid sequence, 75 residues long: MVDVSQHELVPEHTVLDEETLDGVLADYDIDRTELPKIKYKDPALPDNAEIGDVVEIVRDSRTTDEAVVYRLVIE.

It belongs to the archaeal Rpo5/eukaryotic RPB5 RNA polymerase subunit family. Part of the RNA polymerase complex.

It is found in the cytoplasm. The enzyme catalyses RNA(n) + a ribonucleoside 5'-triphosphate = RNA(n+1) + diphosphate. In terms of biological role, DNA-dependent RNA polymerase (RNAP) catalyzes the transcription of DNA into RNA using the four ribonucleoside triphosphates as substrates. This Halobacterium salinarum (strain ATCC 700922 / JCM 11081 / NRC-1) (Halobacterium halobium) protein is DNA-directed RNA polymerase subunit Rpo5.